Here is a 321-residue protein sequence, read N- to C-terminus: Methionyl-tRNA formyltransferase (321 aa).

112–115 (GLLP) is a binding site for (6S)-5,6,7,8-tetrahydrofolate.

Belongs to the Fmt family.

It catalyses the reaction L-methionyl-tRNA(fMet) + (6R)-10-formyltetrahydrofolate = N-formyl-L-methionyl-tRNA(fMet) + (6S)-5,6,7,8-tetrahydrofolate + H(+). In terms of biological role, attaches a formyl group to the free amino group of methionyl-tRNA(fMet). The formyl group appears to play a dual role in the initiator identity of N-formylmethionyl-tRNA by promoting its recognition by IF2 and preventing the misappropriation of this tRNA by the elongation apparatus. The chain is Methionyl-tRNA formyltransferase from Chlamydia caviae (strain ATCC VR-813 / DSM 19441 / 03DC25 / GPIC) (Chlamydophila caviae).